The sequence spans 97 residues: Co-chaperonin GroES (97 aa).

Belongs to the GroES chaperonin family. As to quaternary structure, heptamer of 7 subunits arranged in a ring. Interacts with the chaperonin GroEL.

Its subcellular location is the cytoplasm. Its function is as follows. Together with the chaperonin GroEL, plays an essential role in assisting protein folding. The GroEL-GroES system forms a nano-cage that allows encapsulation of the non-native substrate proteins and provides a physical environment optimized to promote and accelerate protein folding. GroES binds to the apical surface of the GroEL ring, thereby capping the opening of the GroEL channel. This Klebsiella pneumoniae (strain 342) protein is Co-chaperonin GroES.